Reading from the N-terminus, the 369-residue chain is MSTTVEKIKAIEDEMARTQKNKATSFHLGQLKAKLAKLRRELLTSASSGSGGGAGIGFDVARTGVASVGFVGFPSVGKSTLLSKLTGTESEAAEYEFTTLVTVPGVIRYKGAKIQMLDLPGIIDGAKDGRGRGKQVIAVARTCNLLFIILDVNKPLHHKQIIEKELEGVGIRLNKTPPDILIKKKEKGGISITNTVPLTHLGNDEIRAVMSEYRINSAEIAFRCDATVDDLIDVLEASSRRYMPAIYVLNKIDSLSIEELELLYRIPNAVPISSGQDWNLDELLQVMWDRLNLVRIYTKPKGQIPDFTDPVVLRSDRCSVKDFCNQIHKSLVDDFRNALVYGSSVKHQPQYVGLSHILEDEDVVTILKK.

S2 is modified (N-acetylserine). An OBG-type G domain is found at 66–292 (ASVGFVGFPS…LLQVMWDRLN (227 aa)). GTP-binding positions include 72–79 (GFPSVGKS), 118–122 (DLPGI), and 250–253 (NKID). The TGS domain maps to 292–368 (NLVRIYTKPK…EDEDVVTILK (77 aa)).

Belongs to the TRAFAC class OBG-HflX-like GTPase superfamily. OBG GTPase family. In terms of assembly, associates with translating polyribosomes. Interacts with GIR2, TMA46, YAP1 and YGR250C.

It is found in the cytoplasm. Involved in ribosomal function. The sequence is that of Ribosome-interacting GTPase 1 (RBG1) from Saccharomyces cerevisiae (strain ATCC 204508 / S288c) (Baker's yeast).